Here is a 282-residue protein sequence, read N- to C-terminus: 4-hydroxy-3-methylbut-2-enyl diphosphate reductase (282 aa).

Residue Cys12 coordinates [4Fe-4S] cluster. 2 residues coordinate (2E)-4-hydroxy-3-methylbut-2-enyl diphosphate: His40 and His72. 2 residues coordinate dimethylallyl diphosphate: His40 and His72. Residues His40 and His72 each coordinate isopentenyl diphosphate. Cys94 provides a ligand contact to [4Fe-4S] cluster. A (2E)-4-hydroxy-3-methylbut-2-enyl diphosphate-binding site is contributed by His122. His122 lines the dimethylallyl diphosphate pocket. Residue His122 coordinates isopentenyl diphosphate. The Proton donor role is filled by Glu124. Thr160 contacts (2E)-4-hydroxy-3-methylbut-2-enyl diphosphate. Cys188 lines the [4Fe-4S] cluster pocket. Residues Ser216, Asn218, and Ser260 each coordinate (2E)-4-hydroxy-3-methylbut-2-enyl diphosphate. Dimethylallyl diphosphate contacts are provided by Ser216, Asn218, and Ser260. Isopentenyl diphosphate-binding residues include Ser216, Asn218, and Ser260.

This sequence belongs to the IspH family. It depends on [4Fe-4S] cluster as a cofactor.

It catalyses the reaction isopentenyl diphosphate + 2 oxidized [2Fe-2S]-[ferredoxin] + H2O = (2E)-4-hydroxy-3-methylbut-2-enyl diphosphate + 2 reduced [2Fe-2S]-[ferredoxin] + 2 H(+). The enzyme catalyses dimethylallyl diphosphate + 2 oxidized [2Fe-2S]-[ferredoxin] + H2O = (2E)-4-hydroxy-3-methylbut-2-enyl diphosphate + 2 reduced [2Fe-2S]-[ferredoxin] + 2 H(+). It functions in the pathway isoprenoid biosynthesis; dimethylallyl diphosphate biosynthesis; dimethylallyl diphosphate from (2E)-4-hydroxy-3-methylbutenyl diphosphate: step 1/1. It participates in isoprenoid biosynthesis; isopentenyl diphosphate biosynthesis via DXP pathway; isopentenyl diphosphate from 1-deoxy-D-xylulose 5-phosphate: step 6/6. Catalyzes the conversion of 1-hydroxy-2-methyl-2-(E)-butenyl 4-diphosphate (HMBPP) into a mixture of isopentenyl diphosphate (IPP) and dimethylallyl diphosphate (DMAPP). Acts in the terminal step of the DOXP/MEP pathway for isoprenoid precursor biosynthesis. The protein is 4-hydroxy-3-methylbut-2-enyl diphosphate reductase of Geobacter sulfurreducens (strain ATCC 51573 / DSM 12127 / PCA).